Reading from the N-terminus, the 76-residue chain is Probable insulin-like peptide alpha-type 3 (76 aa).

An N-terminal signal peptide occupies residues 1–18 (MFVLLIILSIILAQVTDA). Intrachain disulfides connect Cys-28–Cys-58, Cys-40–Cys-71, and Cys-46–Cys-72.

It belongs to the insulin family.

It is found in the secreted. In Caenorhabditis elegans, this protein is Probable insulin-like peptide alpha-type 3 (ins-23).